Consider the following 1106-residue polypeptide: MYLTKQIPHYSRIHTTQLLTVVNHRTIPFKIRGSFSNCRRYSNFATVPLLERPFKNKSKHNTARASRPFSTQKMLLTKSHPPNMYKDSVFFGYRPIVFSGKQDQKSKVIQCLRTERKTIPDDLVEDEVDRFYNKLGLDDYYFQMEPVSIIADHIEIIYAAKIAAHASHAKEELNIHVKNENEDLAIYLDSSPVTQPELDQSSAVEESISTRYLDPFKLTDPTAYRVESFTSVTNIDRTSTENSNIYTYFVTKCDFVDNPKKDASPDVPTDIASVSDKTFLEKASDNTIEMYQDVMNSVLTRFGPVVRLFDYQGRSEIRLVVGYRRGSIFQYFPSLSKLFRYYGLHSTRTYVEQFSNGVTIISYNFKPELFKNAAVTSINELFSQITREASLLYCLPSTDFQPLFVSEKLSIQEVTYAHCVRIFCEHVMNKLGPEYSSLSAILDHSNNIHAEILETIKRRLSTLAFTRTKIHDTIMQYPGLVHTLFEQFYLEHAINHNSTPHLHRAKSATSLADEASTYSITPMSATALMDLIQKTCTNEEDVSVMEMFVKFNTHLLKTNFFQTTKVALSFRFDPSFLDSTQYKDPLYAMIMSIGNEFRGFHLRFRDVARGGIRLIKSANPEAFGLNARGLFDENYNLAKTQMLKNKDIPEGGAKGVILLGKDCQDKPELAFMKYIDSIIDLLIVNKSQPLVDKLGKPEILFMGPDENTADLVNWATIHAHRRNAPWWKSFFTGKKPTMGGIPHDKYGMTSLSVRCYVEGIYKKLNITDPSKLTKVQTGGPDGDLGSNEIKLSNEKYIAVIDGSGVLYDPAGLDRTELLRLADERKTIDHFDAGKLSPEGYRVLVKDTNLKLPNGEIVRNGTIFRNTAHLRYKADTFVPCGGRPNAININNVEQLIDDHGRPAFKYLVEGANLFITQDAKSVLEKAGVIVIRDASANKGGVTSSSLEVLASLSFDDASFKENMCVHDGKVPTFYADYVNEVKRIIQRNANLEFEAIWKGHSENKIPYTSLSNHLSTEIVKLDHDIYNYEKLWADVGFRNAVLRASIPKTLQAKIGLEKMLERIPESYLRAIFSTYLASRFVYQHVVSSDPFAFFDYISTEMKMLKDA.

The active site involves Lys-654.

This sequence belongs to the Glu/Leu/Phe/Val dehydrogenases family. As to quaternary structure, homotetramer.

The protein resides in the cytoplasm. It carries out the reaction L-glutamate + NAD(+) + H2O = 2-oxoglutarate + NH4(+) + NADH + H(+). Functionally, NAD(+)-dependent glutamate dehydrogenase which degrades glutamate to ammonia and alpha-ketoglutarate. This is Probable NAD-specific glutamate dehydrogenase (gdh2) from Schizosaccharomyces pombe (strain 972 / ATCC 24843) (Fission yeast).